The following is a 469-amino-acid chain: Glutamate--tRNA ligase (469 aa).

Positions 8–18 match the 'HIGH' region motif; it reads PSPTGFLHVGG. The Zn(2+) site is built by C97, C99, C124, and D126. Residues 236 to 240 carry the 'KMSKS' region motif; the sequence is KLSKR. K239 serves as a coordination point for ATP.

This sequence belongs to the class-I aminoacyl-tRNA synthetase family. Glutamate--tRNA ligase type 1 subfamily. In terms of assembly, monomer. Zn(2+) serves as cofactor.

The protein localises to the cytoplasm. It carries out the reaction tRNA(Glu) + L-glutamate + ATP = L-glutamyl-tRNA(Glu) + AMP + diphosphate. Functionally, catalyzes the attachment of glutamate to tRNA(Glu) in a two-step reaction: glutamate is first activated by ATP to form Glu-AMP and then transferred to the acceptor end of tRNA(Glu). The protein is Glutamate--tRNA ligase of Francisella philomiragia subsp. philomiragia (strain ATCC 25017 / CCUG 19701 / FSC 153 / O#319-036).